The sequence spans 451 residues: G-protein coupled receptor 61 (451 aa).

The span at 1–14 (MESSPIPQSSGNSS) shows a compositional bias: low complexity. The disordered stretch occupies residues 1-31 (MESSPIPQSSGNSSTLGRVPQTPGPSTASGV). The Extracellular portion of the chain corresponds to 1–44 (MESSPIPQSSGNSSTLGRVPQTPGPSTASGVPEVGLRDVASESV). Asn12 is a glycosylation site (N-linked (GlcNAc...) asparagine). Residues 45 to 67 (ALFFMLLLDLTAVAGNAAVMAVI) traverse the membrane as a helical segment. The Cytoplasmic portion of the chain corresponds to 68–75 (AKTPALRK). Residues 76 to 98 (FVFVFHLCLVDLLAALTLMPLAM) traverse the membrane as a helical segment. The Extracellular portion of the chain corresponds to 99–112 (LSSSALFDHALFGE). A helical membrane pass occupies residues 113 to 135 (VACRLYLFLSVCFVSLAILSVSA). Topologically, residues 136–155 (INVERYYYVVHPMRYEVRMT) are cytoplasmic. The helical transmembrane segment at 156-178 (LGLVASVLVGVWVKALAMASVPV) threads the bilayer. Residues 179 to 206 (LGRVSWEEGAPSVPPGCSLQWSHSAYCQ) are Extracellular-facing. The chain crosses the membrane as a helical span at residues 207–229 (LFVVVFAVLYFLLPLLLILVVYC). The Cytoplasmic portion of the chain corresponds to 230 to 287 (SMFRVARVAAMQHGPLPTWMETPRQRSESLSSRSTMVTSSGAPQTTPHRTFGGGKAAV). Residues 288–310 (VLLAVGGQFLLCWLPYFSFHLYV) traverse the membrane as a helical segment. The Extracellular portion of the chain corresponds to 311–324 (ALSAQPISTGQVES). The chain crosses the membrane as a helical span at residues 325–344 (VVTWIGYFCFTSNPFFYGCL). At 345-451 (NRQIRGELSK…RPAASPRLES (107 aa)) the chain is on the cytoplasmic side.

This sequence belongs to the G-protein coupled receptor 1 family. Forms heterodimer with MTNR1B. Interacts with ARRB1 and ARRB2 in a spontaneous and agonist-independent manner; leading to the internalization of GPR61 in the endosomal compartment. Expressed in brain; detected in frontal and temporal lobes, occipital pole, amygdala and hippocampus. Also expressed in testis and T cells, B cells, and monocyte. Low expression in many other tissues. Widely expressed in the hippocampus (at protein level).

It localises to the cell membrane. The protein localises to the endosome membrane. Orphan G-protein coupled receptor. Constitutively activates the G(s)-alpha/cAMP signaling pathway. Shows a reciprocal regulatory interaction with the melatonin receptor MTNR1B most likely through receptor heteromerization. May be involved in the regulation of food intake and body weight. The chain is G-protein coupled receptor 61 (GPR61) from Homo sapiens (Human).